The sequence spans 193 residues: ECF RNA polymerase sigma factor SigK (193 aa).

The segment at 35 to 101 (LYDRTRSRVY…RRAVDRVRSE (67 aa)) is sigma-70 factor domain-2. The Polymerase core binding motif lies at 59 to 62 (ETTQ). A sigma-70 factor domain-4 region spans residues 140 to 187 (MGSLSDLQREAIQLAYYEGLTYVQVSERLSANLATIKSRMRDGIRGLK). The H-T-H motif DNA-binding region spans 161 to 180 (YVQVSERLSANLATIKSRMR).

Belongs to the sigma-70 factor family. ECF subfamily. As to quaternary structure, interacts transiently with the RNA polymerase catalytic core formed by RpoA, RpoB, RpoC and RpoZ (2 alpha, 1 beta, 1 beta' and 1 omega subunit) to form the RNA polymerase holoenzyme that can initiate transcription. Interacts (via sigma-70 factor domain 4) with anti-sigma-K factor RskA.

Sigma factors are initiation factors that promote the attachment of RNA polymerase to specific initiation sites and are then released. Extracytoplasmic function (ECF) sigma factors are held in an inactive form by an anti-sigma factor until released by regulated intramembrane proteolysis. This Mycobacterium sp. (strain JLS) protein is ECF RNA polymerase sigma factor SigK (sigK).